We begin with the raw amino-acid sequence, 192 residues long: Transcription antitermination protein NusB (192 aa).

This sequence belongs to the NusB family.

Functionally, involved in transcription antitermination. Required for transcription of ribosomal RNA (rRNA) genes. Binds specifically to the boxA antiterminator sequence of the ribosomal RNA (rrn) operons. This chain is Transcription antitermination protein NusB, found in Lactococcus lactis subsp. lactis (strain IL1403) (Streptococcus lactis).